Consider the following 386-residue polypeptide: Succinate--CoA ligase [ADP-forming] subunit beta (386 aa).

Residues 9–244 (KQILKRFGIS…YDEEIPEEIE (236 aa)) enclose the ATP-grasp domain. ATP contacts are provided by residues K46, 53 to 55 (GRG), E99, C102, and E107. 2 residues coordinate Mg(2+): N199 and D213. Substrate contacts are provided by residues N264 and 320–322 (GIM).

It belongs to the succinate/malate CoA ligase beta subunit family. Heterotetramer of two alpha and two beta subunits. Requires Mg(2+) as cofactor.

It catalyses the reaction succinate + ATP + CoA = succinyl-CoA + ADP + phosphate. It carries out the reaction GTP + succinate + CoA = succinyl-CoA + GDP + phosphate. It functions in the pathway carbohydrate metabolism; tricarboxylic acid cycle; succinate from succinyl-CoA (ligase route): step 1/1. In terms of biological role, succinyl-CoA synthetase functions in the citric acid cycle (TCA), coupling the hydrolysis of succinyl-CoA to the synthesis of either ATP or GTP and thus represents the only step of substrate-level phosphorylation in the TCA. The beta subunit provides nucleotide specificity of the enzyme and binds the substrate succinate, while the binding sites for coenzyme A and phosphate are found in the alpha subunit. The polypeptide is Succinate--CoA ligase [ADP-forming] subunit beta (Ehrlichia ruminantium (strain Welgevonden)).